A 374-amino-acid chain; its full sequence is MILATTGSTCATLGEMVTVLSIDGGGIKGIIPATILEFLEGQLQEVDNNKDARLADYFDVIGGTSTGGLLTAMITTPNENNRPFAAAKDIVPFYFEHGPHIFNSSGTIFGPMYDGKYLLQVLQEKLGETRVHQALTEVAISSFDIKTNKPVIFTKSNLAKSPELDAKMYDICYSTAAAPIYFPPHYFVTHTSNGDRYEFNLVDGAVATVGDPALLSLSVATRLAQEDPAFSSIKSLDYKQMLLLSLGTGTNSEFDKTYTAEEAAKWGPLRWLLAIQQMTNAASSYMTDYYLSTVFQARHSQNNYLRVQENALTGTTTEMDDASEANMELLVQVGETLLKKPVSKDSPETYEEALKRFAKLLSDRKKLRANKASY.

Residues 1 to 11 form the signal peptide; that stretch reads MILATTGSTCA. The PNPLA domain maps to 20 to 217; the sequence is LSIDGGGIKG…TVGDPALLSL (198 aa). Residues 24 to 29 carry the GXGXXG motif; it reads GGGIKG. Residues 63-67 carry the GXSXG motif; sequence GTSTG. Ser65 functions as the Nucleophile in the catalytic mechanism. Residue Asn103 is glycosylated (N-linked (GlcNAc...) asparagine). Residue Asp203 is the Proton acceptor of the active site. The short motif at 203-205 is the DGA/G element; sequence DGA. A coiled-coil region spans residues 309–372; the sequence is ENALTGTTTE…DRKKLRANKA (64 aa).

The protein belongs to the patatin family. Tuber.

It is found in the vacuole. Its function is as follows. Probable lipolytic acyl hydrolase (LAH), an activity which is thought to be involved in the response of tubers to pathogens. This is Patatin-2-Kuras 1 (pat2-k1) from Solanum tuberosum (Potato).